Reading from the N-terminus, the 328-residue chain is Aryl-hydrocarbon-interacting protein-like 1 (328 aa).

The 93-residue stretch at Lys-53–Gln-145 folds into the PPIase FKBP-type domain. 3 TPR repeats span residues Val-178–Leu-211, Asn-230–Ile-263, and Val-264–Met-297.

In terms of assembly, interacts with NUB1.

The protein localises to the cytoplasm. It localises to the nucleus. Functionally, may be important in protein trafficking and/or protein folding and stabilization. The chain is Aryl-hydrocarbon-interacting protein-like 1 (Aipl1) from Mus musculus (Mouse).